Consider the following 126-residue polypeptide: Histone H2B 7 (126 aa).

Residues 1 to 12 (MPEPAKSAPAPK) show a composition bias toward low complexity. Residues 1–35 (MPEPAKSAPAPKKGSKKAVTKTQKKGDKKRKRARK) are disordered. 2 positions are modified to N6-acetyllysine: Lys6 and Lys13. Basic residues predominate over residues 13–34 (KGSKKAVTKTQKKGDKKRKRAR). Ser15 carries the phosphoserine modification. Lys16 and Lys21 each carry N6-acetyllysine. Ser113 carries an O-linked (GlcNAc) serine glycan. Lys121 is covalently cross-linked (Glycyl lysine isopeptide (Lys-Gly) (interchain with G-Cter in ubiquitin)).

Belongs to the histone H2B family. In terms of assembly, the nucleosome is a histone octamer containing two molecules each of H2A, H2B, H3 and H4 assembled in one H3-H4 heterotetramer and two H2A-H2B heterodimers. The octamer wraps approximately 147 bp of DNA. Monoubiquitination of Lys-121 by the BRE1 gives a specific tag for epigenetic transcriptional activation and is also prerequisite for histone H3 'Lys-4' and 'Lys-79' methylation. Post-translationally, phosphorylated on Ser-15 during apoptosis; which facilitates apoptotic chromatin condensation. In terms of processing, glcNAcylation at Ser-113 promotes monoubiquitination of Lys-121. It fluctuates in response to extracellular glucose, and associates with transcribed genes.

It is found in the nucleus. The protein resides in the chromosome. Its function is as follows. Core component of nucleosome. Nucleosomes wrap and compact DNA into chromatin, limiting DNA accessibility to the cellular machineries which require DNA as a template. Histones thereby play a central role in transcription regulation, DNA repair, DNA replication and chromosomal stability. DNA accessibility is regulated via a complex set of post-translational modifications of histones, also called histone code, and nucleosome remodeling. The protein is Histone H2B 7 (H2B-VII) of Gallus gallus (Chicken).